Here is a 455-residue protein sequence, read N- to C-terminus: Bleomycin hydrolase (455 aa).

Active-site residues include Cys73, His372, and Asn396.

Belongs to the peptidase C1 family. As to quaternary structure, homooctamer.

The protein resides in the cytoplasm. The enzyme catalyses Inactivates bleomycin B2 (a cytotoxic glycometallopeptide) by hydrolysis of a carboxyamide bond of beta-aminoalanine, but also shows general aminopeptidase activity. The specificity varies somewhat with source, but amino acid arylamides of Met, Leu and Ala are preferred.. Functionally, the normal physiological role of BLM hydrolase is unknown, but it catalyzes the inactivation of the antitumor drug BLM (a glycopeptide) by hydrolyzing the carboxamide bond of its B-aminoalaninamide moiety thus protecting normal and malignant cells from BLM toxicity. The polypeptide is Bleomycin hydrolase (BLMH) (Gallus gallus (Chicken)).